Consider the following 86-residue polypeptide: Small ribosomal subunit protein bS18 (86 aa).

Belongs to the bacterial ribosomal protein bS18 family. Part of the 30S ribosomal subunit. Forms a tight heterodimer with protein bS6.

In terms of biological role, binds as a heterodimer with protein bS6 to the central domain of the 16S rRNA, where it helps stabilize the platform of the 30S subunit. The protein is Small ribosomal subunit protein bS18 of Maridesulfovibrio salexigens (strain ATCC 14822 / DSM 2638 / NCIMB 8403 / VKM B-1763) (Desulfovibrio salexigens).